The primary structure comprises 413 residues: Monacolin J acid methylbutanoyltransferase (413 aa).

A monacolin J-binding site is contributed by Arg-73. Ser-76 serves as the catalytic Acyl-ester intermediate. Monacolin J-binding residues include Arg-173, Tyr-188, and Tyr-258. Gly-366 serves as a coordination point for 2-methylbutanoate. Monacolin J is bound by residues Glu-388 and Trp-390.

This sequence belongs to the class-A beta-lactamase family. As to quaternary structure, interacts with LovF.

It catalyses the reaction monacolin J carboxylate + (S)-2-methylbutanoyl-[2-methylbutanoate polyketide synthase] = lovastatin carboxylate + holo-[2-methylbutanoate polyketide synthase]. Its pathway is polyketide biosynthesis; lovastatin biosynthesis. Monacolin J acid methylbutanoyltransferase; part of the gene cluster that mediates the biosynthesis of lovastatin (also known as mevinolin, mevacor or monacolin K), a hypolipidemic inhibitor of (3S)-hydroxymethylglutaryl-coenzyme A (HMG-CoA) reductase (HMGR). The first step in the biosynthesis of lovastatin is the production of dihydromonacolin L acid by the lovastatin nonaketide synthase lovB and the trans-acting enoyl reductase lovC via condensation of one acetyl-CoA unit and 8 malonyl-CoA units. Dihydromonacolin L acid is released from lovB by the thioesterase lovG. Next, dihydromonacolin L acid is oxidized by the dihydromonacolin L monooxygenase lovA twice to form monacolin J acid. The 2-methylbutyrate moiety of lovastatin is synthesized by the lovastatin diketide synthase lovF via condensation of one acetyl-CoA unit and one malonyl-CoA unit. Finally, the covalent attachment of this moiety to monacolin J acid is catalyzed by the transesterase lovD to yield lovastatin. LovD has broad substrate specificity and can also convert monacolin J to simvastatin using alpha-dimethylbutanoyl-S-methyl-3-mercaptopropionate (DMB-S-MMP) as the thioester acyl donor, and can also catalyze the reverse reaction and function as hydrolase in vitro. LovD has much higher activity with LovF-bound 2-methylbutanoate than with free diketide substrates. This chain is Monacolin J acid methylbutanoyltransferase, found in Aspergillus terreus (strain NIH 2624 / FGSC A1156).